The sequence spans 402 residues: CCA-adding enzyme (402 aa).

Residues Gly-32 and Arg-35 each coordinate ATP. Residues Gly-32 and Arg-35 each coordinate CTP. Positions 45 and 47 each coordinate Mg(2+). 5 residues coordinate ATP: Arg-116, Asp-159, Arg-162, Arg-165, and Arg-168. The CTP site is built by Arg-116, Asp-159, Arg-162, Arg-165, and Arg-168.

The protein belongs to the tRNA nucleotidyltransferase/poly(A) polymerase family. Bacterial CCA-adding enzyme type 3 subfamily. In terms of assembly, homodimer. It depends on Mg(2+) as a cofactor.

The enzyme catalyses a tRNA precursor + 2 CTP + ATP = a tRNA with a 3' CCA end + 3 diphosphate. It carries out the reaction a tRNA with a 3' CCA end + 2 CTP + ATP = a tRNA with a 3' CCACCA end + 3 diphosphate. In terms of biological role, catalyzes the addition and repair of the essential 3'-terminal CCA sequence in tRNAs without using a nucleic acid template. Adds these three nucleotides in the order of C, C, and A to the tRNA nucleotide-73, using CTP and ATP as substrates and producing inorganic pyrophosphate. tRNA 3'-terminal CCA addition is required both for tRNA processing and repair. Also involved in tRNA surveillance by mediating tandem CCA addition to generate a CCACCA at the 3' terminus of unstable tRNAs. While stable tRNAs receive only 3'-terminal CCA, unstable tRNAs are marked with CCACCA and rapidly degraded. The protein is CCA-adding enzyme of Streptococcus pyogenes serotype M1.